A 224-amino-acid chain; its full sequence is MATPTNKEHFSGGLAKVLAEKWQVDVMLKAKNSDEGSAISAHKLILASRSEVFKNMFELDEFKTSTKHVETITLSEMKHEELEAFVEFICSDGSMLSANVKQHARSLYLAADKYEILHLRDLCRTELISSLSLLNSLDLLVLAQIPFDKVLNDESFSYIKNNISTIASSDEFKLFVAGNPNLAVEIMKVSLITLTLRCSSCGSNHSLQGMYCCNCCRYGTLRLI.

One can recognise a BTB domain in the interval 24–98; that stretch reads VDVMLKAKNS…ICSDGSMLSA (75 aa).

As to quaternary structure, interacts with CUL3A.

It participates in protein modification; protein ubiquitination. In terms of biological role, may act as a substrate-specific adapter of an E3 ubiquitin-protein ligase complex (CUL3-RBX1-BTB) which mediates the ubiquitination and subsequent proteasomal degradation of target proteins. The polypeptide is BTB/POZ domain-containing protein At5g48510 (Arabidopsis thaliana (Mouse-ear cress)).